A 66-amino-acid polypeptide reads, in one-letter code: Large ribosomal subunit protein bL35 (66 aa).

The segment covering 1-46 has biased composition (basic residues); it reads MPKMKTHRASAKRFKRTANGGLKRHHAFTGHRFHGKTKKQRRHLRK. The disordered stretch occupies residues 1–52; sequence MPKMKTHRASAKRFKRTANGGLKRHHAFTGHRFHGKTKKQRRHLRKPAMVSR.

This sequence belongs to the bacterial ribosomal protein bL35 family.

This Lactobacillus acidophilus (strain ATCC 700396 / NCK56 / N2 / NCFM) protein is Large ribosomal subunit protein bL35.